Reading from the N-terminus, the 271-residue chain is HTH-type transcriptional repressor AllR (271 aa).

The region spanning 21–83 (AQALERGIAI…SQLGWWHIGL (63 aa)) is the HTH iclR-type domain. Residues 43 to 62 (VSDISLNLDLPLSTTFRLLK) constitute a DNA-binding region (H-T-H motif). The 170-residue stretch at 98 to 267 (VLSVAGPFMR…ARDISTALGL (170 aa)) folds into the IclR-ED domain. Residues 154–156 (SGA), D207, C217, and 234–236 (SIS) contribute to the glyoxylate site.

In terms of biological role, negative regulator of allantoin and glyoxylate utilization operons. Binds to the gcl promoter and to the allS-allA intergenic region. This Escherichia coli (strain UTI89 / UPEC) protein is HTH-type transcriptional repressor AllR (allR).